The chain runs to 509 residues: Ceramide glucosyltransferase (509 aa).

At 1-42 (MIMQLGLTSLAFLALKCDAYNIAPKIDTPNVEPFAPSGGLKL) the chain is on the lumenal side. Residues 43–63 (LAIVAIIWYVVVLLVAYYGFF) form a helical membrane-spanning segment. Residues 64-384 (EIMQKFSKRK…EATLLEPTTE (321 aa)) lie on the Cytoplasmic side of the membrane. Position 123 (aspartate 123) is a short sequence motif, D1. Residue aspartate 179 is a short sequence motif, D2. Aspartate 321 is a short sequence motif (D3). Aspartate 321 acts as the Proton acceptor in catalysis. The (Q/R)XXRW signature appears at 361–365 (RRIRW). A helical membrane pass occupies residues 385 to 405 (CLLCGTFGTFAISTLFLQSYF). Over 406–408 (NWK) the chain is Lumenal. The helical transmembrane segment at 409-429 (FFIFHLLVWMVTDYTQFHILL) threads the bilayer. Topologically, residues 430 to 466 (TNASQDTATCNVPYFAEPNFNAYGSPFESSNLRTFHR) are cytoplasmic. Residues 467-487 (WVLYWLLREVLALPIWISAML) traverse the membrane as a helical segment. Residues 488–509 (GTRIIWRNRPFRINVDLSAEEL) lie on the Lumenal side of the membrane.

The protein belongs to the glycosyltransferase 2 family.

The protein localises to the golgi apparatus membrane. The catalysed reaction is an N-acylsphing-4-enine + UDP-alpha-D-glucose = a beta-D-glucosyl-(1&lt;-&gt;1')-N-acylsphing-4-enine + UDP + H(+). It functions in the pathway lipid metabolism; sphingolipid metabolism. Catalyzes the final step in the biosynthesis of the membrane lipid glucosylceramide (GluCer), the transfer of glucose to ceramide. Glucosylceramides play important roles in growth, differentiation and pathogenicity. The protein is Ceramide glucosyltransferase of Komagataella phaffii (strain GS115 / ATCC 20864) (Yeast).